The following is a 152-amino-acid chain: Nucleoside diphosphate kinase (152 aa).

Lys9, Phe57, Arg85, Thr91, Arg102, and Asn112 together coordinate ATP. His115 (pros-phosphohistidine intermediate) is an active-site residue.

The protein belongs to the NDK family. Homotetramer. Mg(2+) is required as a cofactor.

Its subcellular location is the cytoplasm. The catalysed reaction is a 2'-deoxyribonucleoside 5'-diphosphate + ATP = a 2'-deoxyribonucleoside 5'-triphosphate + ADP. It catalyses the reaction a ribonucleoside 5'-diphosphate + ATP = a ribonucleoside 5'-triphosphate + ADP. Its function is as follows. Major role in the synthesis of nucleoside triphosphates other than ATP. The ATP gamma phosphate is transferred to the NDP beta phosphate via a ping-pong mechanism, using a phosphorylated active-site intermediate. This is Nucleoside diphosphate kinase from Rhodopirellula baltica (strain DSM 10527 / NCIMB 13988 / SH1).